A 145-amino-acid chain; its full sequence is Large ribosomal subunit protein uL13 (145 aa).

A disordered region spans residues 72-91 (DKMYHRHSNHPGGLKSISAG).

It belongs to the universal ribosomal protein uL13 family. Part of the 50S ribosomal subunit.

Its function is as follows. This protein is one of the early assembly proteins of the 50S ribosomal subunit, although it is not seen to bind rRNA by itself. It is important during the early stages of 50S assembly. The protein is Large ribosomal subunit protein uL13 of Staphylococcus epidermidis (strain ATCC 12228 / FDA PCI 1200).